A 244-amino-acid polypeptide reads, in one-letter code: 1-(5-phosphoribosyl)-5-[(5-phosphoribosylamino)methylideneamino] imidazole-4-carboxamide isomerase (244 aa).

Residue Asp-10 is the Proton acceptor of the active site. The Proton donor role is filled by Asp-132.

Belongs to the HisA/HisF family.

The protein resides in the cytoplasm. The catalysed reaction is 1-(5-phospho-beta-D-ribosyl)-5-[(5-phospho-beta-D-ribosylamino)methylideneamino]imidazole-4-carboxamide = 5-[(5-phospho-1-deoxy-D-ribulos-1-ylimino)methylamino]-1-(5-phospho-beta-D-ribosyl)imidazole-4-carboxamide. It functions in the pathway amino-acid biosynthesis; L-histidine biosynthesis; L-histidine from 5-phospho-alpha-D-ribose 1-diphosphate: step 4/9. The protein is 1-(5-phosphoribosyl)-5-[(5-phosphoribosylamino)methylideneamino] imidazole-4-carboxamide isomerase of Xanthomonas oryzae pv. oryzae (strain MAFF 311018).